The primary structure comprises 283 residues: Small ribosomal subunit protein uS2B (283 aa).

A disordered region spans residues 254-283 (GQVGQSAWDEEGDWNTTGAAQTSDWANTVA). The segment covering 267-283 (WNTTGAAQTSDWANTVA) has biased composition (polar residues).

It belongs to the universal ribosomal protein uS2 family. As to quaternary structure, component of the small ribosomal subunit. Mature ribosomes consist of a small (40S) and a large (60S) subunit. The 40S subunit contains about 33 different proteins and 1 molecule of RNA (18S). The 60S subunit contains about 49 different proteins and 3 molecules of RNA (25S, 5.8S and 5S). Interacts with rps21.

Its subcellular location is the cytoplasm. Required for the assembly and/or stability of the 40S ribosomal subunit. Required for the processing of the 20S rRNA-precursor to mature 18S rRNA in a late step of the maturation of 40S ribosomal subunits. This Schizosaccharomyces japonicus (strain yFS275 / FY16936) (Fission yeast) protein is Small ribosomal subunit protein uS2B (rps0b).